The primary structure comprises 276 residues: NAD-capped RNA hydrolase NudC (276 aa).

Residue R82 participates in substrate binding. Residues C112 and C115 each coordinate Zn(2+). E125 is a binding site for substrate. Residues C130 and C133 each coordinate Zn(2+). Y138 provides a ligand contact to substrate. A Nudix hydrolase domain is found at 139–262 (PRISPSMIVL…SIARYLIDLY (124 aa)). Positions 172, 188, and 192 each coordinate a divalent metal cation. Positions 173 to 194 (GFAEPGESAEDCLVREVREEVA) match the Nudix box motif. 206–213 (QCWPFPHS) provides a ligand contact to substrate. E233 serves as a coordination point for a divalent metal cation. A255 contributes to the substrate binding site.

Belongs to the Nudix hydrolase family. NudC subfamily. As to quaternary structure, homodimer. It depends on Mg(2+) as a cofactor. The cofactor is Mn(2+). Requires Zn(2+) as cofactor.

The enzyme catalyses a 5'-end NAD(+)-phospho-ribonucleoside in mRNA + H2O = a 5'-end phospho-adenosine-phospho-ribonucleoside in mRNA + beta-nicotinamide D-ribonucleotide + 2 H(+). The catalysed reaction is NAD(+) + H2O = beta-nicotinamide D-ribonucleotide + AMP + 2 H(+). It catalyses the reaction NADH + H2O = reduced beta-nicotinamide D-ribonucleotide + AMP + 2 H(+). MRNA decapping enzyme that specifically removes the nicotinamide adenine dinucleotide (NAD) cap from a subset of mRNAs by hydrolyzing the diphosphate linkage to produce nicotinamide mononucleotide (NMN) and 5' monophosphate mRNA. The NAD-cap is present at the 5'-end of some mRNAs and stabilizes RNA against 5'-processing. Has preference for mRNAs with a 5'-end purine. Catalyzes the hydrolysis of a broad range of dinucleotide pyrophosphates. This chain is NAD-capped RNA hydrolase NudC, found in Pseudomonas putida (strain ATCC 700007 / DSM 6899 / JCM 31910 / BCRC 17059 / LMG 24140 / F1).